A 197-amino-acid chain; its full sequence is uncharacterized protein (197 aa).

6 helical membrane-spanning segments follow: residues 5–23 (LNLLIFFIAALLIALGLRF), 27–46 (ISFAGLILLLAVVPALMLRF), 55–77 (VIAGIFVLGLALNALIGVALAYT), 87–109 (LSLLPLTLVLTANVFATSLVIRI), 116–138 (VFAFYFWFLISVGLAFLFLLPTG), and 153–174 (FVEFPILYSELALIPSAFCLVF).

It is found in the cell membrane. This is an uncharacterized protein from Archaeoglobus fulgidus (strain ATCC 49558 / DSM 4304 / JCM 9628 / NBRC 100126 / VC-16).